Reading from the N-terminus, the 255-residue chain is tRNA (guanine-N(1)-)-methyltransferase (255 aa).

Residues G117 and I137–L142 each bind S-adenosyl-L-methionine.

Belongs to the RNA methyltransferase TrmD family. As to quaternary structure, homodimer.

The protein resides in the cytoplasm. It catalyses the reaction guanosine(37) in tRNA + S-adenosyl-L-methionine = N(1)-methylguanosine(37) in tRNA + S-adenosyl-L-homocysteine + H(+). Its function is as follows. Specifically methylates guanosine-37 in various tRNAs. The polypeptide is tRNA (guanine-N(1)-)-methyltransferase (Chromobacterium violaceum (strain ATCC 12472 / DSM 30191 / JCM 1249 / CCUG 213 / NBRC 12614 / NCIMB 9131 / NCTC 9757 / MK)).